A 154-amino-acid polypeptide reads, in one-letter code: ATP synthase subunit b', chloroplastic (154 aa).

The helical transmembrane segment at 22–42 threads the bilayer; sequence GTLPLIAIQFLILMFLLNILL.

The protein belongs to the ATPase B chain family. As to quaternary structure, F-type ATPases have 2 components, F(1) - the catalytic core - and F(0) - the membrane proton channel. F(1) has five subunits: alpha(3), beta(3), gamma(1), delta(1), epsilon(1). F(0) has four main subunits: a(1), b(1), b'(1) and c(10-14). The alpha and beta chains form an alternating ring which encloses part of the gamma chain. F(1) is attached to F(0) by a central stalk formed by the gamma and epsilon chains, while a peripheral stalk is formed by the delta, b and b' chains.

The protein resides in the plastid. The protein localises to the chloroplast thylakoid membrane. F(1)F(0) ATP synthase produces ATP from ADP in the presence of a proton or sodium gradient. F-type ATPases consist of two structural domains, F(1) containing the extramembraneous catalytic core and F(0) containing the membrane proton channel, linked together by a central stalk and a peripheral stalk. During catalysis, ATP synthesis in the catalytic domain of F(1) is coupled via a rotary mechanism of the central stalk subunits to proton translocation. Its function is as follows. Component of the F(0) channel, it forms part of the peripheral stalk, linking F(1) to F(0). The b'-subunit is a diverged and duplicated form of b found in plants and photosynthetic bacteria. The protein is ATP synthase subunit b', chloroplastic of Vaucheria litorea (Yellow-green alga).